A 373-amino-acid polypeptide reads, in one-letter code: Alcohol dehydrogenase class-3 (373 aa).

A1 carries the N-acetylalanine modification. Zn(2+)-binding residues include C44, H66, C96, C99, C102, C110, and C173.

The protein belongs to the zinc-containing alcohol dehydrogenase family. Class-III subfamily. In terms of assembly, homodimer. Zn(2+) serves as cofactor.

The protein localises to the cytoplasm. The enzyme catalyses a primary alcohol + NAD(+) = an aldehyde + NADH + H(+). It carries out the reaction a secondary alcohol + NAD(+) = a ketone + NADH + H(+). It catalyses the reaction S-(hydroxymethyl)glutathione + NADP(+) = S-formylglutathione + NADPH + H(+). The catalysed reaction is S-(hydroxymethyl)glutathione + NAD(+) = S-formylglutathione + NADH + H(+). The enzyme catalyses S-nitrosoglutathione + NADH + H(+) = S-(hydroxysulfenamide)glutathione + NAD(+). Functionally, class-III ADH is remarkably ineffective in oxidizing ethanol, but it readily catalyzes the oxidation of long-chain primary alcohols and the oxidation of S-(hydroxymethyl) glutathione. Also acts as a S-nitroso-glutathione reductase by catalyzing the NADH-dependent reduction of S-nitrosoglutathione, thereby regulating protein S-nitrosylation. In Saara hardwickii (Indian spiny-tailed lizard), this protein is Alcohol dehydrogenase class-3.